Here is a 254-residue protein sequence, read N- to C-terminus: Hydrolase tropI (254 aa).

Active-site residues include Cys-141, Asp-187, and His-219.

The protein belongs to the dienelactone hydrolase family.

Its pathway is secondary metabolite biosynthesis. Functionally, hydrolase; part of the gene cluster that mediates the biosynthesis of the tropolone class of fungal maleic anhydrides. The pathway begins with the synthesis of 3-methylorcinaldehyde by the non-reducing polyketide synthase (PKS) tropA. 3-methylorcinaldehyde is the substrate for the FAD-dependent monooxygenase tropB to yield a dearomatized hydroxycyclohexadione. The 2-oxoglutarate-dependent dioxygenase tropC then performs the oxidative ring expansion to provide the first tropolone metabolite stipitaldehyde. Trop D converts stipitaldehyde into stipitacetal which is in turn converted to stipitalide by the short-chain dehydrogenase/reductase tropE. The next steps involve tropF, tropG, tropH, tropI and tropJ to form successive tropolone maleic anhydrides including stipitaldehydic, stipitatonic and stipitatic acids. In Talaromyces stipitatus (strain ATCC 10500 / CBS 375.48 / QM 6759 / NRRL 1006) (Penicillium stipitatum), this protein is Hydrolase tropI.